We begin with the raw amino-acid sequence, 1242 residues long: DNA-directed RNA polymerase RPB2 homolog (1242 aa).

The C4-type zinc finger occupies 1180 to 1201 (CRNCGEPAIYNASHPIYKCMNC).

This sequence belongs to the RNA polymerase beta chain family. In terms of assembly, part of the viral DNA-directed RNA polymerase that consists of 8 polII-like subunits (RPB1, RPB2, RPB3, RPB5, RPB6, RPB7, RPB9, RPB10), a capping enzyme and a termination factor.

It is found in the host cytoplasm. The protein localises to the virion. The enzyme catalyses RNA(n) + a ribonucleoside 5'-triphosphate = RNA(n+1) + diphosphate. In terms of biological role, catalytic component of the DNA-directed RNA polymerase (RNAP) that catalyzes the transcription in the cytoplasm of viral DNA into RNA using the four ribonucleoside triphosphates as substrates. Forms the polymerase active center together with RPB1. Part of the core element with the central large cleft, the clamp element that moves to open and close the cleft and the jaws that are thought to grab the incoming DNA template. The polypeptide is DNA-directed RNA polymerase RPB2 homolog (African swine fever virus (isolate Tick/Malawi/Lil 20-1/1983) (ASFV)).